The chain runs to 453 residues: Bifunctional protein GlmU (453 aa).

The pyrophosphorylase stretch occupies residues 1-231; sequence MERSSLAVIL…EKELTGCNNR (231 aa). UDP-N-acetyl-alpha-D-glucosamine-binding positions include 10 to 13, Lys24, Gln77, 82 to 83, 105 to 107, Gly143, Glu157, Asn172, and Asn229; these read LAAG, GT, and YGD. Position 107 (Asp107) interacts with Mg(2+). Asn229 provides a ligand contact to Mg(2+). The interval 232–252 is linker; that stretch reads AELAFIERLWQERRRHELMVD. Positions 253 to 453 are N-acetyltransferase; sequence GVSMIAPETV…AQKEAKKKSS (201 aa). UDP-N-acetyl-alpha-D-glucosamine-binding residues include Arg318 and Lys336. His348 acts as the Proton acceptor in catalysis. The UDP-N-acetyl-alpha-D-glucosamine site is built by Tyr351 and Asn362. Residues Ala365, 371–372, Ser390, Ser408, and Arg425 each bind acetyl-CoA; that span reads NY.

This sequence in the N-terminal section; belongs to the N-acetylglucosamine-1-phosphate uridyltransferase family. In the C-terminal section; belongs to the transferase hexapeptide repeat family. Homotrimer. Mg(2+) is required as a cofactor.

Its subcellular location is the cytoplasm. The enzyme catalyses alpha-D-glucosamine 1-phosphate + acetyl-CoA = N-acetyl-alpha-D-glucosamine 1-phosphate + CoA + H(+). The catalysed reaction is N-acetyl-alpha-D-glucosamine 1-phosphate + UTP + H(+) = UDP-N-acetyl-alpha-D-glucosamine + diphosphate. Its pathway is nucleotide-sugar biosynthesis; UDP-N-acetyl-alpha-D-glucosamine biosynthesis; N-acetyl-alpha-D-glucosamine 1-phosphate from alpha-D-glucosamine 6-phosphate (route II): step 2/2. The protein operates within nucleotide-sugar biosynthesis; UDP-N-acetyl-alpha-D-glucosamine biosynthesis; UDP-N-acetyl-alpha-D-glucosamine from N-acetyl-alpha-D-glucosamine 1-phosphate: step 1/1. It functions in the pathway bacterial outer membrane biogenesis; LPS lipid A biosynthesis. Catalyzes the last two sequential reactions in the de novo biosynthetic pathway for UDP-N-acetylglucosamine (UDP-GlcNAc). The C-terminal domain catalyzes the transfer of acetyl group from acetyl coenzyme A to glucosamine-1-phosphate (GlcN-1-P) to produce N-acetylglucosamine-1-phosphate (GlcNAc-1-P), which is converted into UDP-GlcNAc by the transfer of uridine 5-monophosphate (from uridine 5-triphosphate), a reaction catalyzed by the N-terminal domain. This is Bifunctional protein GlmU from Agrobacterium fabrum (strain C58 / ATCC 33970) (Agrobacterium tumefaciens (strain C58)).